Reading from the N-terminus, the 102-residue chain is Putative ubiquitin-like protein FUBI-like protein ENSP00000310146 (102 aa).

The Ubiquitin-like domain occupies 23–99 (LCPQVAYVRA…LEVVGRRLGV (77 aa)).

This Homo sapiens (Human) protein is Putative ubiquitin-like protein FUBI-like protein ENSP00000310146.